Reading from the N-terminus, the 153-residue chain is Alpha-amylase inhibitor 0.28 (153 aa).

The first 30 residues, Met-1–Asn-30, serve as a signal peptide directing secretion. Disulfide bonds link Cys-37–Cys-84, Cys-51–Cys-72, Cys-59–Cys-112, Cys-73–Cys-128, and Cys-86–Cys-143.

This sequence belongs to the protease inhibitor I6 (cereal trypsin/alpha-amylase inhibitor) family. As to quaternary structure, monomer. In terms of processing, the disulfide bonds are essential for the inhibitor activity. In terms of tissue distribution, endosperm.

Its subcellular location is the secreted. Functionally, alpha-amylase inhibitor. The protein is Alpha-amylase inhibitor 0.28 (IMA1) of Triticum aestivum (Wheat).